We begin with the raw amino-acid sequence, 148 residues long: Sec-independent protein translocase protein TatB (148 aa).

The chain crosses the membrane as a helical span at residues 1–21 (MFGISFSELLLVGLVALLVLG). The interval 85 to 148 (EPTPVEHVGE…NDTTQPPRAP (64 aa)) is disordered. Positions 107–148 (APAVAPTESAPVVAPASVEHVAQTAAPTTPAPNDTTQPPRAP) are enriched in low complexity.

This sequence belongs to the TatB family. The Tat system comprises two distinct complexes: a TatABC complex, containing multiple copies of TatA, TatB and TatC subunits, and a separate TatA complex, containing only TatA subunits. Substrates initially bind to the TatABC complex, which probably triggers association of the separate TatA complex to form the active translocon.

Its subcellular location is the cell inner membrane. Its function is as follows. Part of the twin-arginine translocation (Tat) system that transports large folded proteins containing a characteristic twin-arginine motif in their signal peptide across membranes. Together with TatC, TatB is part of a receptor directly interacting with Tat signal peptides. TatB may form an oligomeric binding site that transiently accommodates folded Tat precursor proteins before their translocation. This chain is Sec-independent protein translocase protein TatB, found in Pseudomonas fluorescens (strain Pf0-1).